The following is a 68-amino-acid chain: Neuronal regeneration-related protein (68 aa).

Positions 42–68 (EETGAASLTPPGSREFTSPATSYLHPF) are disordered.

Interacts with FLNA. Interacts with the latency-associated peptides (LAP) of TGFB1 and TGFB2; the interaction results in a decrease in TGFB autoinduction. In terms of processing, phosphorylated on Ser-59. Phosphorylation decreases stability and activity. Expressed in brain and fetal lung.

The protein localises to the cytoplasm. Functionally, may have roles in cellular differentiation. Ectopic expression induces differentiation of fibroblast into myofibroblast and myofibroblast ameboid migration. Increases retinoic-acid regulation of lipid-droplet biogenesis. May also have neural functions. Promotes axonal regeneration and augments motility of gliomas. Down-regulates the expression of TGFB1 and TGFB2 but not of TGFB3. May play a role in the regulation of alveolar generation. In Mus musculus (Mouse), this protein is Neuronal regeneration-related protein (Nrep).